Consider the following 287-residue polypeptide: Nucleotide-binding protein Asuc_0930 (287 aa).

8–15 (GRSGAGKS) lines the ATP pocket. 56 to 59 (DIRN) serves as a coordination point for GTP.

It belongs to the RapZ-like family.

Functionally, displays ATPase and GTPase activities. The chain is Nucleotide-binding protein Asuc_0930 from Actinobacillus succinogenes (strain ATCC 55618 / DSM 22257 / CCUG 43843 / 130Z).